The chain runs to 1053 residues: Probable dihydropyrimidine dehydrogenase [NADP(+)] (1053 aa).

The 4Fe-4S ferredoxin-type 1 domain maps to 84 to 115 (ERGALKEAMRCLKCADAPCQKSCPTQLDIKSF). Residues Cys-94, Cys-97, Cys-102, Cys-106, Cys-145, Cys-151, Cys-155, and Gln-171 each contribute to the [4Fe-4S] cluster site. FAD-binding positions include 207–211 (GCGPA), 231–239 (EKRAYIGGL), Arg-248, and Leu-274. Residues 354-357 (AGDT), 378-379 (RK), Arg-385, 451-453 (AFG), and 495-501 (DVAGVAE) contribute to the NADP(+) site. 494 to 503 (GDVAGVAETT) lines the FAD pocket. FMN is bound by residues Ser-574 and 598-599 (KT). Residues Asn-633 and 692–694 (NLS) each bind substrate. Residue Cys-695 is the Proton acceptor of the active site. Lys-733 is a binding site for FMN. 760 to 761 (NT) contributes to the substrate binding site. FMN contacts are provided by residues Gly-791, 817–819 (TGG), and 840–841 (CS). 2 4Fe-4S ferredoxin-type domains span residues 949-981 (EVAI…FDAV) and 983-1013 (HQPH…MVPR). Positions 958, 961, 964, 968, 992, 995, 998, and 1002 each coordinate [4Fe-4S] cluster.

It belongs to the dihydropyrimidine dehydrogenase family. Requires [4Fe-4S] cluster as cofactor. FAD is required as a cofactor. The cofactor is FMN.

The catalysed reaction is 5,6-dihydrouracil + NADP(+) = uracil + NADPH + H(+). The protein operates within amino-acid biosynthesis; beta-alanine biosynthesis. In terms of biological role, involved in pyrimidine base degradation. Catalyzes the reduction of uracil and thymine. Also involved the degradation of the chemotherapeutic drug 5-fluorouracil. This Caenorhabditis briggsae protein is Probable dihydropyrimidine dehydrogenase [NADP(+)].